Reading from the N-terminus, the 497-residue chain is Cytochrome P450 monooxygenase 151 (497 aa).

A helical transmembrane segment spans residues 1–21 (MTDLVPVYYAFAGVVAALLFY). N-linked (GlcNAc...) asparagine glycosylation is found at asparagine 292 and asparagine 397. Cysteine 441 contacts heme.

The protein belongs to the cytochrome P450 family. Heme serves as cofactor.

It is found in the membrane. The protein operates within secondary metabolite biosynthesis. Functionally, cytochrome P450 monooxygenase that is able to use dehydroabietic acid and testosterone as substrates for oxidation, suggesting that the natural substrate(s) may be structurally related to steroid compounds. The sequence is that of Cytochrome P450 monooxygenase 151 from Postia placenta (strain ATCC 44394 / Madison 698-R) (Brown rot fungus).